The primary structure comprises 293 residues: Proline iminopeptidase (293 aa).

The AB hydrolase-1 domain maps to 28-277 (KPLVLLHGGP…YSRHMPFVEE (250 aa)). Ser104 functions as the Nucleophile in the catalytic mechanism. The active site involves Asp244. The active-site Proton donor is His271.

Belongs to the peptidase S33 family.

The catalysed reaction is Release of N-terminal proline from a peptide.. Releases the N-terminal proline from various substrates. This is Proline iminopeptidase from Clostridioides difficile (strain 630) (Peptoclostridium difficile).